A 641-amino-acid chain; its full sequence is Choline O-acetyltransferase (641 aa).

Phosphoserine is present on Ser17. Residue His335 is the Proton acceptor of the active site. Position 366 is a phosphoserine (Ser366). CoA-binding positions include 413–425 (GKTF…CSPD), Ser451, and Gln552. Residues 615–641 (CSSRQPADSKPPTAKERARGPSQAKQS) are disordered.

It belongs to the carnitine/choline acetyltransferase family.

It carries out the reaction choline + acetyl-CoA = acetylcholine + CoA. In terms of biological role, catalyzes the reversible synthesis of acetylcholine (ACh) from acetyl CoA and choline at cholinergic synapses. The chain is Choline O-acetyltransferase (Chat) from Mus musculus (Mouse).